We begin with the raw amino-acid sequence, 279 residues long: Fatty acid metabolism regulator protein (279 aa).

The HTH gntR-type domain maps to 6–74 (KSPAGFAEKY…HGKPTKVNQF (69 aa)). Residues 34–53 (ERELSELIGVTRTTLREVLQ) constitute a DNA-binding region (H-T-H motif).

In terms of assembly, homodimer.

The protein resides in the cytoplasm. In terms of biological role, multifunctional regulator of fatty acid metabolism. This chain is Fatty acid metabolism regulator protein, found in Vibrio vulnificus (strain CMCP6).